Consider the following 540-residue polypeptide: Phosphatidylinositol 4-phosphate 5-kinase type-1 beta (540 aa).

Positions 1–21 are disordered; that stretch reads MSSAAENGEAAPGKQNEEKTY. Positions 25-395 constitute a PIPK domain; sequence ASSAIKGAIQ…RFLKFMNSRV (371 aa). Phosphoserine is present on residues Ser-445, Ser-447, and Ser-448.

Interacts with RAC1, AJUBA, PLD1, PLD2 and ARF1. As to expression, detected in heart, pancreas, brain, kidney, skeletal muscle and lung.

The protein localises to the cytoplasm. It is found in the cytosol. Its subcellular location is the cell membrane. It localises to the endomembrane system. The enzyme catalyses a 1,2-diacyl-sn-glycero-3-phospho-(1D-myo-inositol 4-phosphate) + ATP = a 1,2-diacyl-sn-glycero-3-phospho-(1D-myo-inositol-4,5-bisphosphate) + ADP + H(+). It carries out the reaction 1-octadecanoyl-2-(5Z,8Z,11Z,14Z)-eicosatetraenoyl-sn-glycero-3-phospho-1D-myo-inositol 4-phosphate + ATP = 1-octadecanoyl-2-(5Z,8Z,11Z,14Z)-eicosatetraenoyl-sn-glycero-3-phospho-1D-myo-inositol 4,5-bisphosphate + ADP + H(+). It catalyses the reaction 1-octadecanoyl-2-(9Z)-octadecenoyl-sn-glycero-3-phospho-1D-myo-inositol 4-phosphate + ATP = 1-octadecanoyl-2-(9Z)-octadecenoyl-sn-glycero-3-phospho-1D-myo-inositol 4,5-bisphosphate + ADP + H(+). The catalysed reaction is 1-octadecanoyl-2-(9Z)-octadecenoyl-sn-glycero-3-phospho-1D-myo-inositol + ATP = 1-octadecanoyl-2-(9Z)-octadecenoyl-sn-glycero-3-phospho-1D-myo-inositol 5-phosphate + ADP + H(+). The enzyme catalyses 1-octadecanoyl-2-(9Z,12Z)-octadecadienoyl-sn-glycero-3-phospho-1D-myo-inositol + ATP = 1-octadecanoyl-2-(9Z,12Z)-octadecadienoyl-sn-glycero-3-phospho-1D-myo-inositol 5-phosphate + ADP + H(+). It carries out the reaction 1-octadecanoyl-2-(5Z,8Z,11Z,14Z-eicosatetraenoyl)-sn-glycero-3-phospho-(1D-myo-inositol) + ATP = 1-octadecanoyl-2-(5Z,8Z,11Z,14Z)-eicosatetraenoyl-sn-glycero-3-phospho-1D-myo-inositol 5-phosphate + ADP + H(+). It catalyses the reaction 1,2-di-(9Z,12Z)-octadecadienoyl-sn-glycero-3-phospho-1D-myo-inositol + ATP = 1,2-di(9Z,12Z)-octadecadienoyl-sn-glycero-3-phospho-1D-myo-inositol 5-phosphate + ADP + H(+). Its function is as follows. Catalyzes the phosphorylation of phosphatidylinositol 4-phosphate (PtdIns(4)P/PI4P) to form phosphatidylinositol 4,5-bisphosphate (PtdIns(4,5)P2/PIP2), a lipid second messenger that regulates several cellular processes such as signal transduction, vesicle trafficking, actin cytoskeleton dynamics, cell adhesion, and cell motility. PtdIns(4,5)P2 can directly act as a second messenger or can be utilized as a precursor to generate other second messengers: inositol 1,4,5-trisphosphate (IP3), diacylglycerol (DAG) or phosphatidylinositol-3,4,5-trisphosphate (PtdIns(3,4,5)P3/PIP3). Mediates RAC1-dependent reorganization of actin filaments. Contributes to the activation of phospholipase PLD2. Together with PIP5K1A, is required, after stimulation by G-protein coupled receptors, for the synthesis of IP3 that will induce stable platelet adhesion. The polypeptide is Phosphatidylinositol 4-phosphate 5-kinase type-1 beta (Homo sapiens (Human)).